The chain runs to 267 residues: Aliphatic sulfonates import ATP-binding protein SsuB 1 (267 aa).

An ABC transporter domain is found at 35–249 (VRVRGLRRVF…RRADPAFDRL (215 aa)). 67–74 (GRSGSGKS) contacts ATP.

The protein belongs to the ABC transporter superfamily. Aliphatic sulfonates importer (TC 3.A.1.17.2) family. As to quaternary structure, the complex is composed of two ATP-binding proteins (SsuB), two transmembrane proteins (SsuC) and a solute-binding protein (SsuA).

The protein localises to the cell membrane. It catalyses the reaction ATP + H2O + aliphatic sulfonate-[sulfonate-binding protein]Side 1 = ADP + phosphate + aliphatic sulfonateSide 2 + [sulfonate-binding protein]Side 1.. In terms of biological role, part of the ABC transporter complex SsuABC involved in aliphatic sulfonates import. Responsible for energy coupling to the transport system. This chain is Aliphatic sulfonates import ATP-binding protein SsuB 1, found in Frankia alni (strain DSM 45986 / CECT 9034 / ACN14a).